The sequence spans 205 residues: Rho GDP-dissociation inhibitor (205 aa).

A compositionally biased stretch (polar residues) spans 1–11 (MSVNNEVSADQ). The segment at 1–31 (MSVNNEVSADQHNPELEDDTFEHGPPVSLGE) is disordered. Position 63 is a phosphoserine (Ser63).

This sequence belongs to the Rho GDI family.

The protein resides in the cytoplasm. It localises to the nucleus. Regulates the GDP/GTP exchange reaction of the Rho proteins by inhibiting the dissociation of GDP from them, and the subsequent binding of GTP to them. The protein is Rho GDP-dissociation inhibitor of Schizosaccharomyces pombe (strain 972 / ATCC 24843) (Fission yeast).